Here is a 183-residue protein sequence, read N- to C-terminus: ARS-binding factor 2, mitochondrial (183 aa).

The transit peptide at 1–26 directs the protein to the mitochondrion; the sequence is MNSYSLLTRSFHESSKPLFNLASTLL. 2 DNA-binding regions (HMG box) span residues 43-111 and 116-183; these read PKRP…KEFD and PKKP…YPLN.

The protein localises to the mitochondrion. It localises to the nucleus. Functionally, specific binding to the autonomously replicating sequence 1 (ARS1). Interaction with regulatory regions: probably involved in compacting the mitochondrial genome. It might play a positive role in gene expression and replication. This Saccharomyces cerevisiae (strain ATCC 204508 / S288c) (Baker's yeast) protein is ARS-binding factor 2, mitochondrial (ABF2).